Consider the following 230-residue polypeptide: Small ribosomal subunit protein uS3 (230 aa).

The KH type-2 domain occupies 39-107 (VRNYLRQKLA…PVHVNIEEIR (69 aa)). A disordered region spans residues 210–230 (SSKPEHESKQRKAGRRNAAAN).

It belongs to the universal ribosomal protein uS3 family. In terms of assembly, part of the 30S ribosomal subunit. Forms a tight complex with proteins S10 and S14.

Binds the lower part of the 30S subunit head. Binds mRNA in the 70S ribosome, positioning it for translation. This chain is Small ribosomal subunit protein uS3, found in Neisseria meningitidis serogroup C (strain 053442).